We begin with the raw amino-acid sequence, 353 residues long: Jasmonate-induced oxygenase 4 (353 aa).

The Fe2OG dioxygenase domain occupies 202–302 (VGASLRTNFY…RVSLAFFYNP (101 aa)). Position 207 (R207) interacts with jasmonate. Residues N209 and Y211 each coordinate 2-oxoglutarate. The Fe cation site is built by H226, D228, and H283. R293 and S295 together coordinate 2-oxoglutarate. Positions 332 and 336 each coordinate jasmonate.

This sequence belongs to the iron/ascorbate-dependent oxidoreductase family. Requires L-ascorbate as cofactor. Fe(2+) serves as cofactor.

It catalyses the reaction jasmonate + 2-oxoglutarate + O2 = (1R,2R)-12-hydroxyjasmonate + succinate + CO2. Its function is as follows. 2-oxoglutarate-dependent dioxygenase involved in the oxidation of jasmonate (JA), a stress-induced phytohormone synthesized in response to attack by pathogens and herbivores, which triggers the activation of defense responses via the JA-mediated signaling pathway. Converts JA to 12-hydroxyjasmonate (12OH-JA), an inactive form of JA. Is specific to free JA, and cannot oxidize the bioactive form jasmonoyl-L-isoleucine (JA-Ile) or other JA-amino acid conjugates. Prevents over-accumulation of JA and indirectly its bioactive form JA-Ile under stress response. Acts as a negative regulator of JA-mediated defense signaling, by contributing to 12OH-JA accumulation, which represses JA defense responses upon infection by the fungal pathogen Botrytis cinerea. Acts as a negative regulator of JA-mediated defense responses upon infestation by the herbivorous caterpillar Mamestra brassicae. The protein is Jasmonate-induced oxygenase 4 of Arabidopsis thaliana (Mouse-ear cress).